Reading from the N-terminus, the 562-residue chain is Phosphoacetylglucosamine mutase (562 aa).

The Phosphoserine intermediate role is filled by S74. Residues S74, D291, D293, and D295 each contribute to the Mg(2+) site. Residues 395-397 (EAN), 526-530 (RPSGT), and R535 contribute to the substrate site.

This sequence belongs to the phosphohexose mutase family. Mg(2+) is required as a cofactor.

It catalyses the reaction N-acetyl-alpha-D-glucosamine 1-phosphate = N-acetyl-D-glucosamine 6-phosphate. It participates in nucleotide-sugar biosynthesis; UDP-N-acetyl-alpha-D-glucosamine biosynthesis; N-acetyl-alpha-D-glucosamine 1-phosphate from alpha-D-glucosamine 6-phosphate (route I): step 2/2. Functionally, interconverts GlcNAc-6-P and GlcNAc-1-P. This Oryza sativa subsp. japonica (Rice) protein is Phosphoacetylglucosamine mutase.